The sequence spans 20 residues: Cytochrome c oxidase subunit 5A-1, mitochondrial (20 aa).

It belongs to the cytochrome c oxidase subunit 5A family. Component of the cytochrome c oxidase (complex IV, CIV), a multisubunit enzyme composed of 14 subunits. The complex is composed of a catalytic core of 3 subunits MT-CO1, MT-CO2 and MT-CO3, encoded in the mitochondrial DNA, and 11 supernumerary subunits COX4I, COX5A, COX5B, COX6A, COX6B, COX6C, COX7A, COX7B, COX7C, COX8 and NDUFA4, which are encoded in the nuclear genome. The complex exists as a monomer or a dimer and forms supercomplexes (SCs) in the inner mitochondrial membrane with NADH-ubiquinone oxidoreductase (complex I, CI) and ubiquinol-cytochrome c oxidoreductase (cytochrome b-c1 complex, complex III, CIII), resulting in different assemblies (supercomplex SCI(1)III(2)IV(1) and megacomplex MCI(2)III(2)IV(2)). Interacts with AFG1L. Interacts with RAB5IF.

It localises to the mitochondrion inner membrane. Its pathway is energy metabolism; oxidative phosphorylation. Its function is as follows. Component of the cytochrome c oxidase, the last enzyme in the mitochondrial electron transport chain which drives oxidative phosphorylation. The respiratory chain contains 3 multisubunit complexes succinate dehydrogenase (complex II, CII), ubiquinol-cytochrome c oxidoreductase (cytochrome b-c1 complex, complex III, CIII) and cytochrome c oxidase (complex IV, CIV), that cooperate to transfer electrons derived from NADH and succinate to molecular oxygen, creating an electrochemical gradient over the inner membrane that drives transmembrane transport and the ATP synthase. Cytochrome c oxidase is the component of the respiratory chain that catalyzes the reduction of oxygen to water. Electrons originating from reduced cytochrome c in the intermembrane space (IMS) are transferred via the dinuclear copper A center (CU(A)) of subunit 2 and heme A of subunit 1 to the active site in subunit 1, a binuclear center (BNC) formed by heme A3 and copper B (CU(B)). The BNC reduces molecular oxygen to 2 water molecules using 4 electrons from cytochrome c in the IMS and 4 protons from the mitochondrial matrix. In Thunnus obesus (Bigeye tuna), this protein is Cytochrome c oxidase subunit 5A-1, mitochondrial.